We begin with the raw amino-acid sequence, 592 residues long: A-type ATP synthase subunit A (592 aa).

234 to 241 (GGFGTGKT) contributes to the ATP binding site.

It belongs to the ATPase alpha/beta chains family. Has multiple subunits with at least A(3), B(3), C, D, E, F, H, I and proteolipid K(x).

It localises to the cell membrane. The catalysed reaction is ATP + H2O + 4 H(+)(in) = ADP + phosphate + 5 H(+)(out). Its function is as follows. Component of the A-type ATP synthase that produces ATP from ADP in the presence of a proton gradient across the membrane. The A chain is the catalytic subunit. The sequence is that of A-type ATP synthase subunit A from Cenarchaeum symbiosum (strain A).